A 248-amino-acid chain; its full sequence is Triosephosphate isomerase (248 aa).

T4 is subject to Phosphothreonine. Residues N10 and K12 each coordinate substrate. S71 is subject to Phosphoserine. Catalysis depends on H95, which acts as the Electrophile. The active-site Proton acceptor is the E165. The residue at position 215 (S215) is a Phosphoserine. K223 is covalently cross-linked (Glycyl lysine isopeptide (Lys-Gly) (interchain with G-Cter in ubiquitin)).

Belongs to the triosephosphate isomerase family. In terms of assembly, homodimer.

It catalyses the reaction D-glyceraldehyde 3-phosphate = dihydroxyacetone phosphate. Its pathway is carbohydrate biosynthesis; gluconeogenesis. It participates in carbohydrate degradation; glycolysis; D-glyceraldehyde 3-phosphate from glycerone phosphate: step 1/1. The protein is Triosephosphate isomerase (TPI1) of Saccharomyces cerevisiae (strain ATCC 204508 / S288c) (Baker's yeast).